The primary structure comprises 342 residues: Glucokinase (342 aa).

7–12 (GDIGGT) is a binding site for ATP.

Belongs to the bacterial glucokinase family.

It is found in the cytoplasm. The catalysed reaction is D-glucose + ATP = D-glucose 6-phosphate + ADP + H(+). This chain is Glucokinase, found in Nostoc sp. (strain PCC 7120 / SAG 25.82 / UTEX 2576).